Reading from the N-terminus, the 376-residue chain is Chaperone protein DnaJ (376 aa).

The J domain maps to 4–70 (DYYQILGVSK…QKRAAYDRFG (67 aa)). Residues 139-217 (GVEKNISFSS…CHGLGRYHKQ (79 aa)) form a CR-type zinc finger. Cysteine 152, cysteine 155, cysteine 169, cysteine 172, cysteine 191, cysteine 194, cysteine 205, and cysteine 208 together coordinate Zn(2+). CXXCXGXG motif repeat units lie at residues 152-159 (CDTCHGSG), 169-176 (CDACGGVG), 191-198 (CHKCQGNG), and 205-212 (CKKCHGLG).

This sequence belongs to the DnaJ family. In terms of assembly, homodimer. The cofactor is Zn(2+).

The protein resides in the cytoplasm. Participates actively in the response to hyperosmotic and heat shock by preventing the aggregation of stress-denatured proteins and by disaggregating proteins, also in an autonomous, DnaK-independent fashion. Unfolded proteins bind initially to DnaJ; upon interaction with the DnaJ-bound protein, DnaK hydrolyzes its bound ATP, resulting in the formation of a stable complex. GrpE releases ADP from DnaK; ATP binding to DnaK triggers the release of the substrate protein, thus completing the reaction cycle. Several rounds of ATP-dependent interactions between DnaJ, DnaK and GrpE are required for fully efficient folding. Also involved, together with DnaK and GrpE, in the DNA replication of plasmids through activation of initiation proteins. This Rickettsia bellii (strain RML369-C) protein is Chaperone protein DnaJ.